We begin with the raw amino-acid sequence, 233 residues long: Hydroxyacylglutathione hydrolase (233 aa).

Positions 52, 54, 56, 57, 108, 125, and 163 each coordinate Zn(2+).

It belongs to the metallo-beta-lactamase superfamily. Glyoxalase II family. In terms of assembly, monomer. It depends on Zn(2+) as a cofactor.

The enzyme catalyses an S-(2-hydroxyacyl)glutathione + H2O = a 2-hydroxy carboxylate + glutathione + H(+). The protein operates within secondary metabolite metabolism; methylglyoxal degradation; (R)-lactate from methylglyoxal: step 2/2. Its function is as follows. Thiolesterase that catalyzes the hydrolysis of S-D-lactoyl-glutathione to form glutathione and D-lactic acid. The protein is Hydroxyacylglutathione hydrolase of Pasteurella multocida (strain Pm70).